A 502-amino-acid polypeptide reads, in one-letter code: Nostrin (502 aa).

In terms of domain architecture, F-BAR spans 1–260; it reads MRDPLTDCSY…AISKVDVEKD (260 aa). Ser-114 bears the Phosphoserine mark. 2 coiled-coil regions span residues 160–230 and 305–335; these read SMTQ…LNQY and KLWR…SSAS. The REM-1 domain maps to 292 to 372; it reads PMDKERRKSL…SYKLSTVLAD (81 aa). The tract at residues 413–437 is disordered; it reads KAESKAPAGEQNNPSSSRPGSSVSQ. The segment covering 423–437 has biased composition (low complexity); the sequence is QNNPSSSRPGSSVSQ. In terms of domain architecture, SH3 spans 438 to 497; that stretch reads GNNQLCKALYTFQARQDDELNLEKGDIVTIHEKKEEGWWFGSLNGKKGHFPAAYVEELPP. The residue at position 479 (Ser-479) is a Phosphoserine.

Homotrimer. Interacts with DAB2. Interacts with NOS3, WASL and CAV1. Interacts (via SH3 domain) with DNM2; this interaction allows the recruitment of NOS3 to dynamin-positive structures. In terms of tissue distribution, over-expressed in brain microcapillaries from spontaneously hypertensive rats.

Its subcellular location is the cell membrane. It is found in the cytoplasmic vesicle. The protein localises to the cytoplasm. The protein resides in the cytoskeleton. It localises to the nucleus. Its function is as follows. Multivalent adapter protein which may decrease NOS3 activity by inducing its translocation away from the plasma membrane. This Rattus norvegicus (Rat) protein is Nostrin.